Here is a 101-residue protein sequence, read N- to C-terminus: Large ribosomal subunit protein uL24 (101 aa).

It belongs to the universal ribosomal protein uL24 family. As to quaternary structure, part of the 50S ribosomal subunit.

Functionally, one of two assembly initiator proteins, it binds directly to the 5'-end of the 23S rRNA, where it nucleates assembly of the 50S subunit. One of the proteins that surrounds the polypeptide exit tunnel on the outside of the subunit. The sequence is that of Large ribosomal subunit protein uL24 from Clostridioides difficile (strain 630) (Peptoclostridium difficile).